A 1377-amino-acid polypeptide reads, in one-letter code: Zinc finger MYM-type protein 2 (1377 aa).

Residues Lys-48, Lys-88, Lys-98, and Lys-104 each participate in a glycyl lysine isopeptide (Lys-Gly) (interchain with G-Cter in SUMO2) cross-link. 2 stretches are compositionally biased toward polar residues: residues 85–115 and 127–138; these read TSSKNEELQGNDSKITPSSKELASQKGSVSE and TNQGQEKNSSNF. The segment at 85–177 is disordered; that stretch reads TSSKNEELQG…GMGNSGITTE (93 aa). Over residues 139 to 152 the composition is skewed to basic and acidic residues; the sequence is IERRPPETKNRTND. Lys-147 is covalently cross-linked (Glycyl lysine isopeptide (Lys-Gly) (interchain with G-Cter in SUMO2)). A compositionally biased stretch (polar residues) spans 153-164; it reads VDFSTSSFSRSK. Residue Ser-159 is modified to Phosphoserine. Glycyl lysine isopeptide (Lys-Gly) (interchain with G-Cter in SUMO2) cross-links involve residues Lys-253 and Lys-297. The tract at residues 273 to 305 is disordered; sequence NGESATHHNPDSWISQSASFPRNQKQPGVDSLS. The segment covering 284–298 has biased composition (polar residues); that stretch reads SWISQSASFPRNQKQ. Ser-305 carries the phosphoserine modification. Residues Lys-312, Lys-325, Lys-348, and Lys-366 each participate in a glycyl lysine isopeptide (Lys-Gly) (interchain with G-Cter in SUMO2) cross-link. The segment at 327 to 363 adopts an MYM-type 1 zinc-finger fold; that stretch reads VKVTCANCKKPLQKGQTAYQRKGSAHLFCSTTCLSSF. The segment at 369 to 409 adopts an MYM-type 2 zinc-finger fold; it reads PKKLCVMCKKDITTMKGTIVAQVDSSESFQEFCSTSCLSLY. Residues Lys-417, Lys-441, Lys-491, Lys-503, Lys-513, Lys-529, and Lys-532 each participate in a glycyl lysine isopeptide (Lys-Gly) (interchain with G-Cter in SUMO2) cross-link. MYM-type zinc fingers lie at residues 421–456 and 463–502; these read NKSRCTICGKLTEIRHEVSFKNMTHKLCSDHCFNRY and IMNCCEQCGEYLPSKGAGNNVLVIDGQQKRFCCQSCVSEY. The MYM-type 5 zinc-finger motif lies at 533-570; sequence LTTCTGCRTQCRFFDMTQCIGPNGYMEPYCSTACMNSH. Glycyl lysine isopeptide (Lys-Gly) (interchain with G-Cter in SUMO2) cross-links involve residues Lys-576, Lys-603, Lys-649, Lys-658, Lys-688, Lys-700, and Lys-709. The MYM-type 6 zinc-finger motif lies at 636-671; sequence QLKCNYCKNSFCSKPEILEWENKVHQFCSKTCSDDY. MYM-type zinc fingers lie at residues 723–758 and 764–799; these read RCVTCNYCSQLCKKGATKELDGVVRDFCSEDCCKKF and KAARCDCCKSQGTLKERVQWRGEMKHFCDQHCLLRF. Residues Lys-764, Lys-788, Lys-812, and Lys-829 each participate in a glycyl lysine isopeptide (Lys-Gly) (interchain with G-Cter in SUMO2) cross-link. Phosphoserine is present on residues Ser-838 and Ser-958. Disordered stretches follow at residues 983–1002 and 1028–1064; these read LLKNSDPETQSSMPDVPYEP and VFGEEYEEQPRPRSKKKGAKRKAVSGYQSHDDSSDNS. Basic residues predominate over residues 1039–1050; sequence PRSKKKGAKRKA. Ser-1064 carries the post-translational modification Phosphoserine. Position 1376 is a phosphothreonine (Thr-1376).

May be a component of a BHC histone deacetylase complex that contains HDAC1, HDAC2, HMG20B/BRAF35, KDM1A, RCOR1/CoREST, PHF21A/BHC80, ZNF198, ZNF217, ZMYM3, GSE1 and GTF2I.

Its subcellular location is the nucleus. Its function is as follows. May function as a transcription factor. This Pongo abelii (Sumatran orangutan) protein is Zinc finger MYM-type protein 2 (ZMYM2).